The following is a 64-amino-acid chain: Large ribosomal subunit protein bL33c (64 aa).

It belongs to the bacterial ribosomal protein bL33 family.

The protein resides in the plastid. The protein localises to the chloroplast. The sequence is that of Large ribosomal subunit protein bL33c (rpl33) from Trieres chinensis (Marine centric diatom).